We begin with the raw amino-acid sequence, 86 residues long: Mu-theraphotoxin-Hhn1c (86 aa).

Residues Met1–Ala21 form the signal peptide. Positions Ser22–Arg49 are excised as a propeptide. 3 disulfide bridges follow: Cys51/Cys66, Cys58/Cys73, and Cys65/Cys80. Ile84 is modified (isoleucine amide).

It belongs to the neurotoxin 10 (Hwtx-1) family. 22 (Htx-4) subfamily. As to quaternary structure, monomer. As to expression, expressed by the venom gland.

The protein localises to the secreted. Functionally, neurotoxin. Selectively blocks neuronal tetrodotoxin-sensitive voltage-gated sodium channels (Nav). Does not affect tetrodotoxin-resistant voltage-gated sodium channels or calcium channels. The protein is Mu-theraphotoxin-Hhn1c of Cyriopagopus hainanus (Chinese bird spider).